The following is a 683-amino-acid chain: FAD-binding monooxygenase ausC (683 aa).

N-linked (GlcNAc...) asparagine glycosylation occurs at Asn-5. Residues 111 to 131 (ILIIGAGFGGLLFAVRLIQTG) form a helical membrane-spanning segment. Residues 150–153 (TWYW), 162–163 (DT), and Tyr-168 each bind FAD. 160–162 (MCD) is an NADP(+) binding site. Asn-286 carries N-linked (GlcNAc...) asparagine glycosylation. Residues 310-316 (TGASAVQ) and 333-334 (RT) each bind NADP(+). 2 N-linked (GlcNAc...) asparagine glycosylation sites follow: Asn-525 and Asn-572.

The protein belongs to the FAD-binding monooxygenase family. FAD is required as a cofactor.

The protein resides in the membrane. It carries out the reaction preaustinoid A + AH2 + O2 = preaustinoid A1 + A + H2O. Its pathway is secondary metabolite biosynthesis; terpenoid biosynthesis. Its function is as follows. FAD-binding monooxygenase; part of the gene cluster A that mediates the biosynthesis of austinol and dehydroaustinol, two fungal meroterpenoids. The first step of the pathway is the synthesis of 3,5-dimethylorsellinic acid by the polyketide synthase ausA. 3,5-dimethylorsellinic acid is then prenylated by the polyprenyl transferase ausN. Further epoxidation by the FAD-dependent monooxygenase ausM and cyclization by the probable terpene cyclase ausL lead to the formation of protoaustinoid A. Protoaustinoid A is then oxidized to spiro-lactone preaustinoid A3 by the combined action of the FAD-binding monooxygenases ausB and ausC, and the dioxygenase ausE. Acid-catalyzed keto-rearrangement and ring contraction of the tetraketide portion of preaustinoid A3 by ausJ lead to the formation of preaustinoid A4. The aldo-keto reductase ausK, with the help of ausH, is involved in the next step by transforming preaustinoid A4 into isoaustinone which is in turn hydroxylated by the P450 monooxygenase ausI to form austinolide. Finally, the cytochrome P450 monooxygenase ausG modifies austinolide to austinol. Austinol can be further modified to dehydroaustinol which forms a diffusible complex with diorcinol that initiates conidiation. Due to genetic rearrangements of the clusters and the subsequent loss of some enzymes, the end products of the Emericella nidulans austinoid biosynthesis clusters are austinol and dehydroaustinol, even if additional enzymes, such as the O-acetyltransferase ausQ and the cytochrome P450 monooxygenase ausR are still functional. The sequence is that of FAD-binding monooxygenase ausC from Emericella nidulans (strain FGSC A4 / ATCC 38163 / CBS 112.46 / NRRL 194 / M139) (Aspergillus nidulans).